We begin with the raw amino-acid sequence, 286 residues long: Shikimate dehydrogenase (NADP(+)) (286 aa).

Shikimate contacts are provided by residues 19–21 (SVS) and T66. Catalysis depends on K70, which acts as the Proton acceptor. 2 residues coordinate shikimate: N91 and D106. Residues 130 to 134 (GAGGS) and A225 contribute to the NADP(+) site. A shikimate-binding site is contributed by Y227. G248 lines the NADP(+) pocket.

Belongs to the shikimate dehydrogenase family. Homodimer.

It catalyses the reaction shikimate + NADP(+) = 3-dehydroshikimate + NADPH + H(+). Its pathway is metabolic intermediate biosynthesis; chorismate biosynthesis; chorismate from D-erythrose 4-phosphate and phosphoenolpyruvate: step 4/7. Involved in the biosynthesis of the chorismate, which leads to the biosynthesis of aromatic amino acids. Catalyzes the reversible NADPH linked reduction of 3-dehydroshikimate (DHSA) to yield shikimate (SA). This is Shikimate dehydrogenase (NADP(+)) from Dehalococcoides mccartyi (strain CBDB1).